We begin with the raw amino-acid sequence, 105 residues long: Type VII secretion system extracellular protein D (105 aa).

In terms of assembly, forms heterodimers with EsxB.

It is found in the secreted. The sequence is that of Type VII secretion system extracellular protein D from Staphylococcus aureus (strain USA300).